A 640-amino-acid chain; its full sequence is Scarecrow-like protein 27 (640 aa).

Low complexity-rich tracts occupy residues 68 to 79 and 86 to 98; these read SYSSTTTTLSSS and TVTN…GDDN. The disordered stretch occupies residues 68–98; it reads SYSSTTTTLSSSHGGGGTTVTNTTVTAGDDN. Positions 259-639 constitute a GRAS domain; sequence GMAGDDQSVI…KELVTVSAWK (381 aa). The interval 266–331 is leucine repeat I (LRI); that stretch reads SVIIEQLFNA…AEALLSLIHN (66 aa). Residues 350–422 are VHIID; sequence YRSFSETSPF…NRASSLKLTV (73 aa). The short motif at 383 to 387 is the VHIID element; the sequence is IHIID. The leucine repeat II (LRII) stretch occupies residues 438–470; the sequence is FTEENLKTFAGEVKIPFEIELLSVELLLNPAYW. The segment at 480 to 565 is PFYRE; the sequence is EAIAVNLPVN…RFWVQPSIEK (86 aa). The interval 568–639 is SAW; that stretch reads MKRHRWIERS…KELVTVSAWK (72 aa).

The protein belongs to the GRAS family. As to expression, expressed in seedlings, roots, cotyledons, leaves and flowers.

The protein resides in the nucleus. In terms of biological role, probable transcription factor involved in plant development. The protein is Scarecrow-like protein 27 (SCL27) of Arabidopsis thaliana (Mouse-ear cress).